A 365-amino-acid chain; its full sequence is Phosphatidylcholine:ceramide cholinephosphotransferase 4 (365 aa).

Over 1-44 (MISYPFFSLSPPGLVPPPMAVPPVEMYSGSFWNRMRKPLPLRTQ) the chain is Cytoplasmic. Residues 45-65 (VIRFTVVFVIVSFILAVALQI) traverse the membrane as a helical segment. Over 66-92 (THERMPDPKVTKPLPDLGFELLTKVPG) the chain is Lumenal. A helical transmembrane segment spans residues 93–113 (MYVLADCCIGFLNILSVFTAF). At 114-165 (KLYLLHRHCVGSGEPELPCNIPGVSRFFLSVWLCKENCRIELRNIHTIAWIR) the chain is on the cytoplasmic side. The helical transmembrane segment at 166–186 (FITSYALLLLFRSAVIVMTSL) threads the bilayer. Topologically, residues 187 to 229 (PAPDDLCQDPPKIENPVKNVILTVLTAGGGSIHCGDLMYSGHT) are lumenal. Residue H228 is part of the active site. A helical transmembrane segment spans residues 230 to 250 (VILTLHLMFHWIYGAMVHWSF). A topological domain (cytoplasmic) is located at residue R251. A helical transmembrane segment spans residues 252–272 (PVVTVVAIFGYYCIVASRFHY). Active-site residues include H271 and D275. The Lumenal portion of the chain corresponds to 273–275 (TDD). The chain crosses the membrane as a helical span at residues 276 to 296 (VLVAIYLTIATFIAVGHNADG). Over 297–365 (APWQLQLFIR…SLMFKCGAYV (69 aa)) the chain is Cytoplasmic.

This sequence belongs to the sphingomyelin synthase family.

The protein resides in the golgi apparatus membrane. It carries out the reaction an N-acylsphing-4-enine + a 1,2-diacyl-sn-glycero-3-phosphocholine = a sphingomyelin + a 1,2-diacyl-sn-glycerol. It catalyses the reaction an N-acylsphinganine + a 1,2-diacyl-sn-glycero-3-phosphocholine = an N-acylsphinganine-1-phosphocholine + a 1,2-diacyl-sn-glycerol. The enzyme catalyses an N-acylsphing-4-enine + a 1,2-diacyl-sn-glycero-3-phosphoethanolamine = an N-acylsphing-4-enine 1-phosphoethanolamine + a 1,2-diacyl-sn-glycerol. The catalysed reaction is an N-acylsphinganine + a 1,2-diacyl-sn-glycero-3-phosphoethanolamine = an N-acylsphinganine-1-phosphoethanolamine + a 1,2-diacyl-sn-glycerol. It carries out the reaction a 1,2-diacyl-sn-glycero-3-phospho-(1D-myo-inositol) + an N-acylsphing-4-enine = an N-acylsphing-4-enine-(1D-myo-inositol) + a 1,2-diacyl-sn-glycerol. It catalyses the reaction an N-acylsphinganine + a 1,2-diacyl-sn-glycero-3-phospho-(1D-myo-inositol) = an N-acylsphinganine-(1D-myo-inositol) + a 1,2-diacyl-sn-glycerol. Bifunctional sphingomyelin (SM)/ethanolamine phosphorylceramide (EPC) synthase with minimal inositol phosphorylceramide (IPC) synthase activity. Specificity is likely to be defined by residues in the lumenal catalytic domain that interact with the polar head groups of the phospholipid donors. SM is synthesized by both stages of the parasite life cycle, bloodstream forms (BSF) and procyclic forms (PCF), by transferring the phosphoryl headgroup from a 1,2-diacyl-sn-glycero-3-phosphocholine to an N-acylsphing-4-enine (ceramide) or an N-acylsphinganine (dihydroceramide) with release of 1,2-diacyl-sn-glycerol. Also catalyzes the reverse reaction, production of ceramide from sphingomyelin. EPC is synthesized by transferring phosphoethanolamine from a 1,2-diacyl-sn-glycero-3-phosphoethanolamine to ceramide or dihydroceramide by BSF and PCF, while IPC is confined to PCF. The ceramide/dihydroceramide ratios are skewed towards dihydroceramide in PCF parasites and ceramide in BSF parasites, this is likely due to differential expression and/or regulation of dihydroceramide desaturase, the enzyme responsible for converting dihydroceramide to ceramide. The protein is Phosphatidylcholine:ceramide cholinephosphotransferase 4 of Trypanosoma brucei brucei.